We begin with the raw amino-acid sequence, 541 residues long: MAAASFQPLKCLLLWVFFVITPPVKAVPEPGIWTVPIGSGAGSLFFRKTLYNSTNIKVKLISPNCPTPVKLTVKWYLRSHRCYNQFTNLEEVLERHHTNLDTTDNFCKNVSKPDFCDKNEDKNIDCNKDMHALPTLKMSKLVPKISVNQSAGSKNPLNQMDFDIVARTYQDGPYLFVLQVKGDENVKWNLSVTVSMKGPHGFISASDWPLMIFYMVMCIMYILLALLWFIWSACYWKDLLRIQFWIAAVIFLGMLEKAVYYAEYQNTDNTGVSSHGLLIFAELISSIKRTLARLLVTIVSLGYGIIKPRLGAVMHRVVGMGVLYFVFAAVEGVMRIIGAKEYDLVLLAGIPLALLDSGLCWWIFVSLAQTMKTLKLRKNTVKYSLYRHFTNTLIFAILASIIFMIWRTKKFQLVDCQADWMELWVDDAYWRFLFFIILLVIMFLWRPSANNQRYAFTPLIDDSDDEVEEFLVTDHLAEGMKLRGTKPECNGAPKPPATNIDEDLKWVEENIPSSFADAALPVLMDSDEEIMMTKYEMSKIE.

The N-terminal stretch at 1 to 26 is a signal peptide; sequence MAAASFQPLKCLLLWVFFVITPPVKA. At 27–209 the chain is on the lumenal side; that stretch reads VPEPGIWTVP…HGFISASDWP (183 aa). Residues asparagine 52, asparagine 109, asparagine 148, and asparagine 189 are each glycosylated (N-linked (GlcNAc...) asparagine). 2 cysteine pairs are disulfide-bonded: cysteine 65-cysteine 116 and cysteine 82-cysteine 416. A helical transmembrane segment spans residues 210 to 230; sequence LMIFYMVMCIMYILLALLWFI. Residues 231-241 lie on the Cytoplasmic side of the membrane; it reads WSACYWKDLLR. Residues 242 to 262 traverse the membrane as a helical segment; sequence IQFWIAAVIFLGMLEKAVYYA. Residues 263–293 lie on the Lumenal side of the membrane; the sequence is EYQNTDNTGVSSHGLLIFAELISSIKRTLAR. The helical transmembrane segment at 294-314 threads the bilayer; that stretch reads LLVTIVSLGYGIIKPRLGAVM. Residues 315–316 lie on the Cytoplasmic side of the membrane; sequence HR. A helical membrane pass occupies residues 317–337; the sequence is VVGMGVLYFVFAAVEGVMRII. Topologically, residues 338 to 344 are lumenal; sequence GAKEYDL. The helical transmembrane segment at 345 to 365 threads the bilayer; the sequence is VLLAGIPLALLDSGLCWWIFV. Residues 366-384 are Cytoplasmic-facing; it reads SLAQTMKTLKLRKNTVKYS. A helical transmembrane segment spans residues 385–405; the sequence is LYRHFTNTLIFAILASIIFMI. Residues 406–422 lie on the Lumenal side of the membrane; the sequence is WRTKKFQLVDCQADWME. A helical membrane pass occupies residues 423 to 443; the sequence is LWVDDAYWRFLFFIILLVIMF. The Cytoplasmic portion of the chain corresponds to 444 to 541; it reads LWRPSANNQR…MTKYEMSKIE (98 aa).

This sequence belongs to the LU7TM family. TMEM87 subfamily.

The protein localises to the cell membrane. Its subcellular location is the golgi apparatus membrane. In terms of biological role, potential monoatomic ion channel gated by mechanical force, implicated in normal touch sensitivity through the generation of mechanically activated currents. However, a direct channel activity is debated and an alternative could be that it functions as a chaperone for an unidentified mechanosensitive ion channel. Could also be involved in cell mechanosensitivity regulating cell adhesion and migration. May also be involved in retrograde transport from endosomes to the trans-Golgi network (TGN). In Xenopus tropicalis (Western clawed frog), this protein is Transmembrane protein 87A.